Reading from the N-terminus, the 721-residue chain is Polyribonucleotide nucleotidyltransferase (721 aa).

Mg(2+) is bound by residues Asp-495 and Asp-501. The 60-residue stretch at 562–621 (PRLLSFRIDPELIGTVIGPGGRTIKGITERTNTKIDIEDGGIVTIASHDGAAAEEAQKII) folds into the KH domain. The S1 motif domain maps to 631-699 (GEIFPGVVTR…SRGRINLTLR (69 aa)). A disordered region spans residues 702 to 721 (GQNGGMSYPEPTPTPVAPLS). Over residues 711-721 (EPTPTPVAPLS) the composition is skewed to pro residues.

The protein belongs to the polyribonucleotide nucleotidyltransferase family. It depends on Mg(2+) as a cofactor.

It localises to the cytoplasm. The catalysed reaction is RNA(n+1) + phosphate = RNA(n) + a ribonucleoside 5'-diphosphate. Involved in mRNA degradation. Catalyzes the phosphorolysis of single-stranded polyribonucleotides processively in the 3'- to 5'-direction. The protein is Polyribonucleotide nucleotidyltransferase of Prochlorococcus marinus (strain MIT 9301).